An 867-amino-acid chain; its full sequence is uncharacterized protein (867 aa).

Positions 76–108 form a DNA-binding region, zn(2)-C6 fungal-type; sequence CDFCRQKKIRCDMDQSPRPGNACINCRKHHLDC. Disordered regions lie at residues 110–167 and 217–257; these read FTRT…ITPV and PQLA…NSNL. Composition is skewed to polar residues over residues 137-167 and 248-257; these read SAKS…ITPV and SISSYTNSNL.

Its subcellular location is the nucleus. This is an uncharacterized protein from Schizosaccharomyces pombe (strain 972 / ATCC 24843) (Fission yeast).